A 227-amino-acid polypeptide reads, in one-letter code: 2,3-bisphosphoglycerate-dependent phosphoglycerate mutase (227 aa).

Residues 8–15 (RHGKSVWN), 21–22 (TG), arginine 58, 110–113 (ERMY), lysine 121, 137–138 (RR), and 181–182 (GN) each bind substrate. The active-site Tele-phosphohistidine intermediate is the histidine 9. Glutamate 110 serves as the catalytic Proton donor/acceptor.

It belongs to the phosphoglycerate mutase family. BPG-dependent PGAM subfamily.

It carries out the reaction (2R)-2-phosphoglycerate = (2R)-3-phosphoglycerate. It functions in the pathway carbohydrate degradation; glycolysis; pyruvate from D-glyceraldehyde 3-phosphate: step 3/5. Its function is as follows. Catalyzes the interconversion of 2-phosphoglycerate and 3-phosphoglycerate. The polypeptide is 2,3-bisphosphoglycerate-dependent phosphoglycerate mutase (Chlamydia abortus (strain DSM 27085 / S26/3) (Chlamydophila abortus)).